A 144-amino-acid polypeptide reads, in one-letter code: MIALIQRVSEAAVRVDGEVVGAIDKGLLVLLGVEREDDEAKAKRLVERVTSYRVFEDSEGKMNLSVKDVGGSVLVVSQFTLPADTKKGTRAGFSRGAAPQEAERLYDYFSDLCAQILPTERGRFAADMKVSLINDGPVTFWLQA.

Residues 136–137 (GP) carry the Gly-cisPro motif, important for rejection of L-amino acids motif.

The protein belongs to the DTD family. As to quaternary structure, homodimer.

It localises to the cytoplasm. It carries out the reaction glycyl-tRNA(Ala) + H2O = tRNA(Ala) + glycine + H(+). The catalysed reaction is a D-aminoacyl-tRNA + H2O = a tRNA + a D-alpha-amino acid + H(+). Its function is as follows. An aminoacyl-tRNA editing enzyme that deacylates mischarged D-aminoacyl-tRNAs. Also deacylates mischarged glycyl-tRNA(Ala), protecting cells against glycine mischarging by AlaRS. Acts via tRNA-based rather than protein-based catalysis; rejects L-amino acids rather than detecting D-amino acids in the active site. By recycling D-aminoacyl-tRNA to D-amino acids and free tRNA molecules, this enzyme counteracts the toxicity associated with the formation of D-aminoacyl-tRNA entities in vivo and helps enforce protein L-homochirality. This is D-aminoacyl-tRNA deacylase from Vibrio cholerae serotype O1 (strain ATCC 39541 / Classical Ogawa 395 / O395).